Reading from the N-terminus, the 153-residue chain is Small ribosomal subunit protein uS13 (153 aa).

The interval 129 to 153 (RGQRTKSTFRHGSSVGVSRTRPTGN) is disordered. Polar residues predominate over residues 143 to 153 (VGVSRTRPTGN).

The protein belongs to the universal ribosomal protein uS13 family. In terms of assembly, part of the 30S ribosomal subunit. Forms a loose heterodimer with protein S19. Forms two bridges to the 50S subunit in the 70S ribosome.

Located at the top of the head of the 30S subunit, it contacts several helices of the 16S rRNA. In the 70S ribosome it contacts the 23S rRNA (bridge B1a) and protein L5 of the 50S subunit (bridge B1b), connecting the 2 subunits; these bridges are implicated in subunit movement. This chain is Small ribosomal subunit protein uS13, found in Methanosphaera stadtmanae (strain ATCC 43021 / DSM 3091 / JCM 11832 / MCB-3).